Consider the following 1352-residue polypeptide: MIRSVLVLMCSLTFIGNLTRGQSVDMGHNGTGSCLDSQVQPDYFESVHTTWPMPIDTSKAEGVIYPNGKSYSNITLTYTGLYPKANDLGKQYLFSDGHSAPGRLNNLFVSNYSSQVESFDDGFVVRIGAAANKTGTTVISQSTFKPIKKIYPAFLLGHSVGNYTPSNRTGRYLNHTLVILPDGCGTILHAFYCVLHPRTQQNCAGETNFKSLSLWDTPASDCVSGSYNQEATLGAFKVYFDLINCTFRYNYTITEDENAEWFGITQDTQGVHLYSSRKENVFRNNMFHFATLPVYQKILYYTVIPRSIRSPFNDRKAWAAFYIYKLHPLTYLLNFDVEGYITKAVDCGYDDLAQLQCSYESFEVETGVYSVSSFEASPRGEFIEQATTQECDFTPMLTGTPPPIYNFKRLVFTNCNYNLTKLLSLFQVSEFSCHQVSPSSLATGCYSSLTVDYFAYSTDMSSYLQPGSAGAIVQFNYKQDFSNPTCRVLATVPQNLTTITKPSNYAYLTECYKTSAYGKNYLYNAPGAYTPCLSLASRGFSTKYQSHSDGELTTTGYIYPVTGNLQMAFIISVQYGTDTNSVCPMQALRNDTSIEDKLDVCVEYSLHGITGRGVFHNCTSVGLRNQRFVYDTFDNLVGYHSDNGNYYCVRPCVSVPVSVIYDKASNSHATLFGSVACSHVTTMMSQFSRMTKTNLLARTTPGPLQTTVGCAMGFINSSMVVDECQLPLGQSLCAIPPTTSSRVRRATSGASDVFQIATLNFTSPLTLAPINSTGFVVAVPTNFTFGVTQEFIETTIQKITVDCKQYVCNGFKKCEDLLKEYGQFCSKINQALHGANLRQDESIANLFSSIKTQNTQPLQAGLNGDFNLTMLQIPQVTTGERKYRSTIEDLLFNKVTIADPGYMQGYDECMQQGPQSARDLICAQYVAGYKVLPPLYDPYMEAAYTSSLLGSIAGASWTAGLSSFAAIPFAQSIFYRLNGVGITQQVLSENQKIIANKFNQALGAMQTGFTTTNLAFNKVQDAVNANAMALSKLAAELSNTFGAISSSISDILARLDTVEQEAQIDRLINGRLTSLNAFVAQQLVRTEAAARSAQLAQDKVNECVKSQSKRNGFCGTGTHIVSFAINAPNGLYFFHVGYQPTSHVNATAAYGLCNTENPQKCIAPIDGYFVLNQTTSTVADSDQQWYYTGSSFFHPEPITEANSKYVSMDVKFENLTNRLPPPLLSNSTDLDFKEELEEFFKNVSSQGPNFQEISKINTTLLNLNTELMVLSEVVKQLNESYIDLKELGNYTFYQKWPWYIWLGFIAGLVALALCVFFILCCTGCGTSCLGKLKCNRCCDSYDEYEVEKIHVH.

The first 12 residues, 1-12 (MIRSVLVLMCSL), serve as a signal peptide directing secretion. The Extracellular portion of the chain corresponds to 13–1297 (TFIGNLTRGQ…GNYTFYQKWP (1285 aa)). The BetaCoV S1-NTD domain occupies 22 to 359 (QSVDMGHNGT…DDLAQLQCSY (338 aa)). N-linked (GlcNAc...) asparagine; by host glycosylation is found at N29, N73, N111, N132, N167, N174, N244, and N250. C193 and C245 are disulfide-bonded. Disulfide bonds link C347/C357 and C391/C415. In terms of domain architecture, BetaCoV S1-CTD spans 389 to 585 (QECDFTPMLT…GTDTNSVCPM (197 aa)). N-linked (GlcNAc...) asparagine; by host glycosylation is present at N418. 2 disulfide bridges follow: C433–C486 and C445–C583. Residues N495, N590, N617, N716, N760, N771, N782, and N867 are each glycosylated (N-linked (GlcNAc...) asparagine; by host). Fusion peptide regions lie at residues 885-906 (STIEDLLFNKVTIADPGYMQGY) and 904-926 (QGYDECMQQGPQSARDLICAQYV). C909 and C922 are oxidised to a cystine. A heptad repeat 1 region spans residues 991-1041 (QKIIANKFNQALGAMQTGFTTTNLAFNKVQDAVNANAMALSKLAAELSNTF). A coiled-coil region spans residues 1020-1064 (QDAVNANAMALSKLAAELSNTFGAISSSISDILARLDTVEQEAQI). N-linked (GlcNAc...) asparagine; by host glycans are attached at residues N1145, N1172, N1214, N1226, N1242, N1257, N1278, and N1289. The segment at 1247–1286 (GPNFQEISKINTTLLNLNTELMVLSEVVKQLNESYIDLKE) is heptad repeat 2. The stretch at 1259-1287 (TLLNLNTELMVLSEVVKQLNESYIDLKEL) forms a coiled coil. The helical transmembrane segment at 1298 to 1318 (WYIWLGFIAGLVALALCVFFI) threads the bilayer. Residues 1319 to 1352 (LCCTGCGTSCLGKLKCNRCCDSYDEYEVEKIHVH) lie on the Cytoplasmic side of the membrane. The short motif at 1350 to 1352 (HVH) is the KxHxx element.

Belongs to the betacoronaviruses spike protein family. As to quaternary structure, homotrimer; each monomer consists of a S1 and a S2 subunit. The resulting peplomers protrude from the virus surface as spikes. Specific enzymatic cleavages in vivo yield mature proteins. The precursor is processed into S1 and S2 by host cell furin or another cellular protease to yield the mature S1 and S2 proteins. Additionally, a second cleavage leads to the release of a fusion peptide after viral attachment to host cell receptor. In terms of processing, the cytoplasmic Cys-rich domain is palmitoylated. Spike glycoprotein is digested within host endosomes.

The protein localises to the virion membrane. The protein resides in the host endoplasmic reticulum-Golgi intermediate compartment membrane. It localises to the host cell membrane. Its function is as follows. Attaches the virion to the cell membrane by interacting with host receptor, initiating the infection. In terms of biological role, mediates fusion of the virion and cellular membranes by acting as a class I viral fusion protein. Under the current model, the protein has at least three conformational states: pre-fusion native state, pre-hairpin intermediate state, and post-fusion hairpin state. During viral and target cell membrane fusion, the coiled coil regions (heptad repeats) assume a trimer-of-hairpins structure, positioning the fusion peptide in close proximity to the C-terminal region of the ectodomain. The formation of this structure appears to drive apposition and subsequent fusion of viral and target cell membranes. Functionally, acts as a viral fusion peptide which is unmasked following S2 cleavage occurring upon virus endocytosis. This chain is Spike glycoprotein, found in Bat coronavirus HKU5 (BtCoV).